We begin with the raw amino-acid sequence, 337 residues long: Anaerobic sulfite reductase subunit C (337 aa).

The [4Fe-4S] cluster site is built by cysteine 115, cysteine 121, cysteine 153, cysteine 157, cysteine 180, cysteine 183, cysteine 186, cysteine 190, cysteine 212, cysteine 215, cysteine 218, and cysteine 222. Residue cysteine 157 participates in siroheme binding. 2 4Fe-4S ferredoxin-type domains span residues 171–200 and 203–232; these read AKMR…CLAL and GKAV…RKPD.

It belongs to the nitrite and sulfite reductase 4Fe-4S domain family. In terms of assembly, the anaerobic sulfite reductase seems to consist of three subunits. It depends on [4Fe-4S] cluster as a cofactor. The cofactor is siroheme.

It is found in the cytoplasm. It carries out the reaction hydrogen sulfide + 3 NAD(+) + 3 H2O = sulfite + 3 NADH + 4 H(+). Its pathway is sulfur metabolism; sulfite reduction. Its function is as follows. This enzyme catalyzes the hydrogen sulfide production from sulfite. It is strictly anaerobic. It is regulated by electron acceptors rather than by cysteine. The chain is Anaerobic sulfite reductase subunit C (asrC) from Salmonella typhi.